The chain runs to 147 residues: Lysozyme C (147 aa).

Positions 1–18 (MKVLLLLGFIFCSMAAHG) are cleaved as a signal peptide. Residues 19-147 (KRMERCEFAR…LSKYLEGCHL (129 aa)) enclose the C-type lysozyme domain. Intrachain disulfides connect Cys-24-Cys-145, Cys-48-Cys-133, Cys-83-Cys-99, and Cys-95-Cys-113. Catalysis depends on residues Glu-53 and Asp-71.

Belongs to the glycosyl hydrolase 22 family. Monomer.

The protein resides in the secreted. The catalysed reaction is Hydrolysis of (1-&gt;4)-beta-linkages between N-acetylmuramic acid and N-acetyl-D-glucosamine residues in a peptidoglycan and between N-acetyl-D-glucosamine residues in chitodextrins.. In terms of biological role, lysozymes have primarily a bacteriolytic function; those in tissues and body fluids are associated with the monocyte-macrophage system and enhance the activity of immunoagents. This is Lysozyme C (LYZ) from Trichosurus vulpecula (Brush-tailed possum).